We begin with the raw amino-acid sequence, 333 residues long: DNA-directed RNA polymerase subunit alpha (333 aa).

Residues methionine 1 to lysine 234 are alpha N-terminal domain (alpha-NTD). The segment at isoleucine 248 to alanine 333 is alpha C-terminal domain (alpha-CTD).

It belongs to the RNA polymerase alpha chain family. As to quaternary structure, homodimer. The RNAP catalytic core consists of 2 alpha, 1 beta, 1 beta' and 1 omega subunit. When a sigma factor is associated with the core the holoenzyme is formed, which can initiate transcription.

The enzyme catalyses RNA(n) + a ribonucleoside 5'-triphosphate = RNA(n+1) + diphosphate. Functionally, DNA-dependent RNA polymerase catalyzes the transcription of DNA into RNA using the four ribonucleoside triphosphates as substrates. This Ectopseudomonas mendocina (strain ymp) (Pseudomonas mendocina) protein is DNA-directed RNA polymerase subunit alpha.